The sequence spans 114 residues: Pro-FMRFamide-related neuropeptide FF (114 aa).

The signal sequence occupies residues Met1–Ala21. A propeptide spanning residues Glu22 to Pro69 is cleaved from the precursor. Positions Glu29 to Arg51 are disordered. At Phe82 the chain carries Phenylalanine amide. Residues Asn85–Arg100 constitute a propeptide that is removed on maturation. Phe111 carries the phenylalanine amide modification.

This sequence belongs to the FARP (FMRFamide related peptide) family.

The protein resides in the secreted. Its function is as follows. Morphine modulating peptides. Have wide-ranging physiologic effects, including the modulation of morphine-induced analgesia, elevation of arterial blood pressure, and increased somatostatin secretion from the pancreas. Neuropeptide FF and SF potentiate and sensitize ASIC2 and ASIC3 channels. This is Pro-FMRFamide-related neuropeptide FF (Npff) from Rattus norvegicus (Rat).